Consider the following 179-residue polypeptide: Large ribosomal subunit protein bL9 (179 aa).

The protein belongs to the bacterial ribosomal protein bL9 family.

In terms of biological role, binds to the 23S rRNA. This chain is Large ribosomal subunit protein bL9, found in Bartonella bacilliformis (strain ATCC 35685 / KC583 / Herrer 020/F12,63).